The chain runs to 84 residues: Large ribosomal subunit protein bL27 (84 aa).

A disordered region spans residues 1–27 (MAHKKGQGASRNGRDSKSKRLGVKVGA).

It belongs to the bacterial ribosomal protein bL27 family.

This Chlamydia pneumoniae (Chlamydophila pneumoniae) protein is Large ribosomal subunit protein bL27.